Here is a 121-residue protein sequence, read N- to C-terminus: MKYLFVCVSLALFAYISANPAYGGNRGGYGGGYGNDRVEYEQILVPSYGRSRGGYGGYDRPQILRSAPSGSRASAAAASAAAAIAPGSYSQYAIPRYEIDGSYNGPSHGHGGYGHGGRGGY.

The first 18 residues, 1-18, serve as a signal peptide directing secretion; it reads MKYLFVCVSLALFAYISA.

It belongs to the chorion protein S15/S18 family.

It is found in the secreted. In terms of biological role, chorion membrane (egg shell) protein; plays a role in protecting the egg from the environment. The sequence is that of Chorion protein S15 (Cp15) from Drosophila subobscura (Fruit fly).